The sequence spans 342 residues: Phosphate acyltransferase (342 aa).

Belongs to the PlsX family. As to quaternary structure, homodimer. Probably interacts with PlsY.

It is found in the cytoplasm. It carries out the reaction a fatty acyl-[ACP] + phosphate = an acyl phosphate + holo-[ACP]. Its pathway is lipid metabolism; phospholipid metabolism. Functionally, catalyzes the reversible formation of acyl-phosphate (acyl-PO(4)) from acyl-[acyl-carrier-protein] (acyl-ACP). This enzyme utilizes acyl-ACP as fatty acyl donor, but not acyl-CoA. The chain is Phosphate acyltransferase from Legionella pneumophila (strain Corby).